The sequence spans 544 residues: MARFIFITGGVVSSLGKGLMAASLAALLQARGYKVRIRKFDPYLNVDPGTMSPYQHGEVYVTDDGAETDLDLGHYERFTGVPGRQSDNITSGRIYQTIIQKERRGDYLGATVQVIPHVTDAIKEFARADTEGLDFVLCEIGGTVGDIESLPFMEAIRQLRNDLGRGNSIFVHLTLVPYIAAAGELKTKPTQHSVRDLTSLGIQPDVLVCRCDRPLPEGERAKIALFCNVPTEAVIPALDASSIYGVPLQYHEEGLDEAVLSAFGIEAKDEPDLTRWTEIMDRLENPEGEVTIGVVGKYVGLLDAYKSLHEALVHGGIANRVKVNIRWIDAELFEQEEGGIAAQLEPMHAILVPGGFGERGSEGKIAAVRFARERKVPYFGICLGMQMACIEGARNTAGIAAASTTEFGPTDEPVVGMITEWMSEDGLQKREAGGDLGGTMRLGAYDARLSGNSHAATIYGATDISERHRHRYEVNVHYRESLERGGLVFSGMSPDGELPEVVERPDHPWFVGVQFHPELKSKPFDPHPLFASFIAAALQQSRLV.

Positions 1 to 265 (MARFIFITGG…DEAVLSAFGI (265 aa)) are amidoligase domain. S13 contributes to the CTP binding site. S13 serves as a coordination point for UTP. 14–19 (SLGKGL) is a binding site for ATP. Y54 provides a ligand contact to L-glutamine. Residue D71 participates in ATP binding. Mg(2+) is bound by residues D71 and E139. CTP contacts are provided by residues 146–148 (DIE), 186–191 (KTKPTQ), and K222. Residues 186 to 191 (KTKPTQ) and K222 each bind UTP. The region spanning 291–543 (TIGVVGKYVG…IAAALQQSRL (253 aa)) is the Glutamine amidotransferase type-1 domain. G355 serves as a coordination point for L-glutamine. C382 acts as the Nucleophile; for glutamine hydrolysis in catalysis. Residues 383–386 (LGMQ), E406, and R471 each bind L-glutamine. Active-site residues include H516 and E518.

It belongs to the CTP synthase family. As to quaternary structure, homotetramer.

It carries out the reaction UTP + L-glutamine + ATP + H2O = CTP + L-glutamate + ADP + phosphate + 2 H(+). The enzyme catalyses L-glutamine + H2O = L-glutamate + NH4(+). The catalysed reaction is UTP + NH4(+) + ATP = CTP + ADP + phosphate + 2 H(+). The protein operates within pyrimidine metabolism; CTP biosynthesis via de novo pathway; CTP from UDP: step 2/2. With respect to regulation, allosterically activated by GTP, when glutamine is the substrate; GTP has no effect on the reaction when ammonia is the substrate. The allosteric effector GTP functions by stabilizing the protein conformation that binds the tetrahedral intermediate(s) formed during glutamine hydrolysis. Inhibited by the product CTP, via allosteric rather than competitive inhibition. In terms of biological role, catalyzes the ATP-dependent amination of UTP to CTP with either L-glutamine or ammonia as the source of nitrogen. Regulates intracellular CTP levels through interactions with the four ribonucleotide triphosphates. This is CTP synthase from Rhizorhabdus wittichii (strain DSM 6014 / CCUG 31198 / JCM 15750 / NBRC 105917 / EY 4224 / RW1) (Sphingomonas wittichii).